The chain runs to 579 residues: Folliculin (579 aa).

Residues 32-52 (GASCGDSIGQGEQAEDEEMGI) are disordered. In terms of domain architecture, uDENN FLCN/SMCR8-type spans 86–242 (RSLAAGHPGY…RNGNAARSLT (157 aa)). A cDENN FLCN/SMCR8-type domain is found at 337 to 491 (NMVQRRMGVF…ILNKIEAALS (155 aa)). Positions 493–558 (ENLSMDVVDQ…LLKFWMTGLS (66 aa)) constitute a dDENN FLCN/SMCR8-type domain.

Belongs to the folliculin family. In terms of assembly, component of the lysosomal folliculin complex (LFC).

The protein resides in the lysosome membrane. It is found in the cytoplasm. Its subcellular location is the cytosol. It localises to the cell projection. The protein localises to the cilium. The protein resides in the cytoskeleton. It is found in the microtubule organizing center. Its subcellular location is the centrosome. It localises to the spindle. The protein localises to the nucleus. Its activity is regulated as follows. GTPase-activating activity is inhibited in the folliculin complex (LFC), which stabilizes the GDP-bound state of RagA/RRAGA (or RagB/RRAGB), because Arg-164 is located far from the RagC/RRAGC or RagD/RRAGD nucleotide pocket. Disassembly of the LFC complex upon amino acid restimulation liberates the GTPase-activating activity. Its function is as follows. Multi-functional protein, involved in both the cellular response to amino acid availability and in the regulation of glycolysis. GTPase-activating protein that plays a key role in the cellular response to amino acid availability through regulation of the non-canonical mTORC1 signaling cascade controlling the MiT/TFE factors tfeb and tfe3. Activates mTORC1 by acting as a GTPase-activating protein: specifically stimulates GTP hydrolysis by RagC/RRAGC or RagD/RRAGD, promoting the conversion to the GDP-bound state of RagC/RRAGC or RagD/RRAGD, and thereby activating the kinase activity of mTORC1. The GTPase-activating activity is inhibited during starvation and activated in presence of nutrients. Acts as a key component for non-canonical mTORC1-dependent control of the MiT/TFE factors tfeb and tfe3, while it is not involved in mTORC1-dependent phosphorylation of canonical RPS6KB1/S6K1 and EIF4EBP1/4E-BP1. In low-amino acid conditions, the lysosomal folliculin complex (LFC) is formed on the membrane of lysosomes, which inhibits the GTPase-activating activity of flcn, inactivates mTORC1 and maximizes nuclear translocation of tfeb and tfe3. Upon amino acid restimulation, RagA/RRAGA (or RagB/RRAGB) nucleotide exchange promotes disassembly of the LFC complex and liberates the GTPase-activating activity of flcn, leading to activation of mTORC1 and subsequent cytoplasmic retention of tfeb and tfe3. Required for the exit of hematopoietic stem cell from pluripotency by promoting mTOR-dependent cytoplasmic retention of tfe3, thereby increasing Wnt signaling. Acts as an inhibitor of browning of adipose tissue by regulating mTOR-dependent cytoplasmic retention of tfe3. In response to flow stress, regulates STK11/LKB1 accumulation and mTORC1 activation through primary cilia. Required for starvation-induced perinuclear clustering of lysosomes by promoting association of rilp with its effector rab34. Involved in the control of embryonic stem cells differentiation; together with lamtor1 it is necessary to recruit and activate RagC/RRAGC and RagD/RRAGD at the lysosomes, and to induce exit of embryonic stem cells from pluripotency via non-canonical, mTOR-independent tfe3 inactivation. Regulates glycolysis by binding to lactate dehydrogenase ldha, acting as an uncompetitive inhibitor. The protein is Folliculin of Xenopus tropicalis (Western clawed frog).